The primary structure comprises 372 residues: L-selectin (372 aa).

A signal peptide spans 1-28 (MVFPWRCQSAQRGSWSFLKLWIRTLLCC). Residues 29-38 (DLLPHHGTHC) constitute a propeptide that is removed on maturation. At 39-332 (WTYHYSERSM…FSKIKEGDYN (294 aa)) the chain is on the extracellular side. Positions 55–155 (KFCKHNYTDL…ACHKRKAALC (101 aa)) constitute a C-type lectin domain. Intrachain disulfides connect cysteine 57-cysteine 155, cysteine 128-cysteine 147, cysteine 128-cysteine 160, cysteine 160-cysteine 171, cysteine 165-cysteine 180, cysteine 182-cysteine 191, cysteine 197-cysteine 241, cysteine 227-cysteine 254, cysteine 259-cysteine 303, and cysteine 289-cysteine 316. N-linked (GlcNAc...) asparagine glycans are attached at residues asparagine 60 and asparagine 104. Ca(2+) is bound by residues glutamate 118, asparagine 120, glutamate 126, asparagine 143, and aspartate 144. The EGF-like domain maps to 156–192 (YTASCQPESCNRHGECVETINNNTCICDPGYYGPQCQ). Residue asparagine 177 is glycosylated (N-linked (GlcNAc...) asparagine). Sushi domains follow at residues 195-256 (IQCE…ICQV) and 257-318 (IQCM…ICQK). N-linked (GlcNAc...) asparagine glycans are attached at residues asparagine 226, asparagine 246, and asparagine 278. Residues 333–355 (PLFIPVAVMVTAFSGLAFIIWLA) traverse the membrane as a helical segment. Residues 356–372 (RRLKKGKKSQERMDDPY) lie on the Cytoplasmic side of the membrane.

The protein belongs to the selectin/LECAM family. In terms of assembly, interaction with SELPLG/PSGL1 and PODXL2 is required for promoting recruitment and rolling of leukocytes. This interaction is dependent on the sialyl Lewis X glycan modification of SELPLG and PODXL2, and tyrosine sulfation modifications of SELPLG. Sulfation on 'Tyr-51' of SELPLG is important for L-selectin binding. N-glycosylated. As to expression, expressed in peripheral blood mononuclear cells (PBMC), spleen and thymus.

Its subcellular location is the cell membrane. Calcium-dependent lectin that mediates cell adhesion by binding to glycoproteins on neighboring cells. Mediates the adherence of lymphocytes to endothelial cells of high endothelial venules in peripheral lymph nodes. Promotes initial tethering and rolling of leukocytes in endothelia. In Rattus norvegicus (Rat), this protein is L-selectin (Sell).